Consider the following 187-residue polypeptide: Large ribosomal subunit protein uL6 (187 aa).

The tract at residues 159–187 (PYKGKGIRYKGEQLSSNPERLQVRSKEVR) is disordered.

The protein belongs to the universal ribosomal protein uL6 family. In terms of assembly, part of the 50S ribosomal subunit.

This protein binds to the 23S rRNA, and is important in its secondary structure. It is located near the subunit interface in the base of the L7/L12 stalk, and near the tRNA binding site of the peptidyltransferase center. The chain is Large ribosomal subunit protein uL6 from Aquifex pyrophilus.